We begin with the raw amino-acid sequence, 494 residues long: Tripartite motif-containing protein 5 (494 aa).

Ala-2 carries the post-translational modification N-acetylalanine. An RING-type zinc finger spans residues 15–59; it reads CPICLELLTEPLSLDCGHSFCQACITANHKESTLHQGERSCPLCR. Ser-86 carries the phosphoserine modification. The segment at 91 to 132 adopts a B box-type zinc-finger fold; that stretch reads QKVDLCARHGEKLLLFCQQDGNVICWLCERSQEHRGHHTFLV. Residues Cys-96, His-99, Cys-118, and His-124 each coordinate Zn(2+). Residues 140–223 are a coiled coil; the sequence is RENLQVVLEM…RLVQSENDMV (84 aa). Residues 186 to 199 are required for interaction with GABARAP and for autophagy; that stretch reads FKQLRDILDCEESN. The B30.2/SPRY domain maps to 280 to 494; that stretch reads PDLKGMLQVS…LPMTLCSPRS (215 aa).

It belongs to the TRIM/RBCC family. In terms of assembly, can form homodimers and homotrimers. In addition to lower-order dimerization, also exhibits a higher-order multimerization and both low- and high-order multimerizations are essential for its restriction activity. Interacts with BTBD1 and BTBD2. Interacts with PSMC4, PSMC5, PSMD7 and HSPA8/HSC70. Interacts (via B30.2/SPRY domain) with HSPA1A/B. Interacts with PSMC2, MAP3K7/TAK1, TAB2 and TAB3. Interacts with SQSTM1. Interacts with TRIM6 and TRIM34. Interacts with ULK1 (phosphorylated form), GABARAP, GABARAPL1, GABARAPL2, MAP1LC3A, MAP1LC3C and BECN1. In terms of processing, degraded in a proteasome-independent fashion in the absence of viral infection but in a proteasome-dependent fashion following exposure to restriction sensitive virus. Post-translationally, autoubiquitinated in a RING finger- and UBE2D2-dependent manner. Monoubiquitinated by TRIM21. Deubiquitinated by Yersinia YopJ. Ubiquitination may not lead to proteasomal degradation.

It localises to the cytoplasm. It is found in the nucleus. It catalyses the reaction S-ubiquitinyl-[E2 ubiquitin-conjugating enzyme]-L-cysteine + [acceptor protein]-L-lysine = [E2 ubiquitin-conjugating enzyme]-L-cysteine + N(6)-ubiquitinyl-[acceptor protein]-L-lysine.. It functions in the pathway protein modification; protein ubiquitination. Functionally, capsid-specific restriction factor that prevents infection from non-host-adapted retroviruses. Blocks viral replication early in the life cycle, after viral entry but before reverse transcription. In addition to acting as a capsid-specific restriction factor, also acts as a pattern recognition receptor that activates innate immune signaling in response to the retroviral capsid lattice. Binding to the viral capsid triggers its E3 ubiquitin ligase activity, and in concert with the heterodimeric ubiquitin conjugating enzyme complex UBE2V1-UBE2N (also known as UBC13-UEV1A complex) generates 'Lys-63'-linked polyubiquitin chains, which in turn are catalysts in the autophosphorylation of the MAP3K7/TAK1 complex (includes TAK1, TAB2, and TAB3). Activation of the MAP3K7/TAK1 complex by autophosphorylation results in the induction and expression of NF-kappa-B and MAPK-responsive inflammatory genes, thereby leading to an innate immune response in the infected cell. Plays a role in regulating autophagy through activation of autophagy regulator BECN1 by causing its dissociation from its inhibitors BCL2 and TAB2. The polypeptide is Tripartite motif-containing protein 5 (TRIM5) (Plecturocebus donacophilus (Bolivian gray titi monkey)).